The following is a 75-amino-acid chain: Small ribosomal subunit protein bS18 (75 aa).

It belongs to the bacterial ribosomal protein bS18 family. As to quaternary structure, part of the 30S ribosomal subunit. Forms a tight heterodimer with protein bS6.

In terms of biological role, binds as a heterodimer with protein bS6 to the central domain of the 16S rRNA, where it helps stabilize the platform of the 30S subunit. This Klebsiella pneumoniae (strain 342) protein is Small ribosomal subunit protein bS18.